The chain runs to 335 residues: MLIFNDLRHFLPVVPRFVYKSLKKHPRKFGLTEIVLDNGRRAEGRWREKTENLTHKKITKKHLLRCIKKIGIFNEDNRAGIYQTLHRISCIKNRYGNIVGLTYRIGREFIGIGPIIRDLIESNQSTLLIGRPGIGKTSFIREISRILSNEIMKRVIIVDSANEISGEGCCPHISTGKARRMEVQSINSQHEVMIEAIENHTPEIIIIDEIGTEYESQAAISISQRGIRLIGSAHSSDLFNLAKNPTLCKLVGGIESVTLSDTQAILRKTKKTILERKGCSCFNATIEINKKRTVKVYTSVEQSIDAILEGRVNNSQIRSMKLNGEITISLNYQDE.

Residue 130 to 137 (GRPGIGKT) coordinates ATP.

The protein belongs to the ycf45 family.

The protein resides in the plastid. It is found in the chloroplast. This is an uncharacterized protein from Cyanidium caldarium (Red alga).